The chain runs to 462 residues: Ribosomal protein uS12 methylthiotransferase RimO (462 aa).

The region spanning 22–133 is the MTTase N-terminal domain; sequence ASVAFLHLGC…IIEVLQRVRQ (112 aa). C31, C67, C96, C171, C175, and C178 together coordinate [4Fe-4S] cluster. A Radical SAM core domain is found at 157-386; that stretch reads TTGRFVSYLK…VAIQQPISAA (230 aa). One can recognise a TRAM domain in the interval 389–460; sequence QALIGQTVDV…LYDLTGEINH (72 aa).

The protein belongs to the methylthiotransferase family. RimO subfamily. Requires [4Fe-4S] cluster as cofactor.

Its subcellular location is the cytoplasm. The catalysed reaction is L-aspartate(89)-[ribosomal protein uS12]-hydrogen + (sulfur carrier)-SH + AH2 + 2 S-adenosyl-L-methionine = 3-methylsulfanyl-L-aspartate(89)-[ribosomal protein uS12]-hydrogen + (sulfur carrier)-H + 5'-deoxyadenosine + L-methionine + A + S-adenosyl-L-homocysteine + 2 H(+). Its function is as follows. Catalyzes the methylthiolation of an aspartic acid residue of ribosomal protein uS12. The protein is Ribosomal protein uS12 methylthiotransferase RimO of Prochlorococcus marinus (strain MIT 9211).